A 425-amino-acid polypeptide reads, in one-letter code: MTAIIDIVGREILDSRGNPTVEVDVVLEDGSFGRAAVPSGASTGAHEAVELRDGGSRYLGKGVEKAVEVVNGKIFDAIAGMDAESQLLIDQTLIDLDGSANKGNLGANAILGVSLAVAKAAAQASGLPLYRYVGGTNAHVLPVPMMNIINGGAHADNPIDFQEFMILPVGATSIREAVRYGSEVFHTLKKRLKDAGHNTNVGDEGGFAPNLKNAQAALDFIMESIEKAGFKPGEDIALGLDCAATEFFKDGNYVYEGERKTRDPKAQAKYLAKLASDYPIVTIEDGMAEDDWEGWKYLTDLIGNKCQLVGDDLFVTNSARLRDGIRLGVANSILVKVNQIGSLSETLDAVETAHKAGYTAVMSHRSGETEDSTIADLAVATNCGQIKTGSLARSDRTAKYNQLIRIEEELGKQARYAGRSALKLL.

Residue glutamine 162 coordinates (2R)-2-phosphoglycerate. Glutamate 204 (proton donor) is an active-site residue. Positions 241, 284, and 311 each coordinate Mg(2+). (2R)-2-phosphoglycerate contacts are provided by lysine 336, arginine 365, serine 366, and lysine 387. Lysine 336 serves as the catalytic Proton acceptor.

This sequence belongs to the enolase family. Mg(2+) is required as a cofactor.

The protein localises to the cytoplasm. Its subcellular location is the secreted. The protein resides in the cell surface. The enzyme catalyses (2R)-2-phosphoglycerate = phosphoenolpyruvate + H2O. It participates in carbohydrate degradation; glycolysis; pyruvate from D-glyceraldehyde 3-phosphate: step 4/5. Its function is as follows. Catalyzes the reversible conversion of 2-phosphoglycerate (2-PG) into phosphoenolpyruvate (PEP). It is essential for the degradation of carbohydrates via glycolysis. This Brucella abortus (strain S19) protein is Enolase.